Reading from the N-terminus, the 618-residue chain is Acetolactate synthase (618 aa).

The interval 1-30 (MSAPTKPHSPTFKPEPHSAANEPKHPAARP) is disordered. Glu-85 contacts thiamine diphosphate. FAD contacts are provided by residues Arg-187, 293–314 (HGTV…LGTR), and 336–355 (DIDP…IVGD). The thiamine pyrophosphate binding stretch occupies residues 429 to 509 (QHQMWAAQFI…VKVALINNGN (81 aa)). Residues Asp-480 and Asn-507 each coordinate Mg(2+).

It belongs to the TPP enzyme family. Requires Mg(2+) as cofactor. The cofactor is thiamine diphosphate.

It carries out the reaction 2 pyruvate + H(+) = (2S)-2-acetolactate + CO2. It functions in the pathway amino-acid biosynthesis; L-isoleucine biosynthesis; L-isoleucine from 2-oxobutanoate: step 1/4. The protein operates within amino-acid biosynthesis; L-valine biosynthesis; L-valine from pyruvate: step 1/4. The polypeptide is Acetolactate synthase (ilvB) (Mycobacterium bovis (strain ATCC BAA-935 / AF2122/97)).